Consider the following 491-residue polypeptide: Keratin, type I cytoskeletal 24 (491 aa).

The disordered stretch occupies residues 1–23; sequence MFCSAQKGSCSSRVSSSGAVGSR. The tract at residues 1–117 is head; that stretch reads MFCSAQKGSC…GYDGGLLSGS (117 aa). Residues 8–23 show a composition bias toward low complexity; sequence GSCSSRVSSSGAVGSR. The coil 1A stretch occupies residues 118-153; the sequence is EKQTMQGLNDRLANYLDKVRALEEANTDLETKIKDW. An IF rod domain is found at 118-432; that stretch reads EKQTMQGLND…RLLNGDGGGC (315 aa). The tract at residues 154–174 is linker 1; it reads YGRHGSGKDGPGRDYSQYCSV. Positions 175 to 266 are coil 1B; that stretch reads IEDLKNQIIS…KNHEEEMKCL (92 aa). The linker 12 stretch occupies residues 267–289; sequence QGSSGGDVTVEMNATPGTDLTKL. The tract at residues 290–428 is coil 2; sequence LNDMRAQYEA…ETYRRLLNGD (139 aa). Residues 429–491 are tail; it reads GGGCDYRNLV…VSNISEVKIK (63 aa).

This sequence belongs to the intermediate filament family. In terms of assembly, heterotetramer of two type I and two type II keratins.

In Rattus norvegicus (Rat), this protein is Keratin, type I cytoskeletal 24 (Krt24).